Here is a 272-residue protein sequence, read N- to C-terminus: Undecaprenyl-diphosphatase (272 aa).

8 helical membrane passes run 1-21 (MSTL…FLPI), 39-59 (QGLA…MMYF), 91-111 (WWIL…KDFI), 117-137 (SALV…FADI), 151-171 (LGLK…IPGT), 196-216 (FLLS…KLIL), 228-248 (LGSL…LILL), and 251-271 (LGMM…LWFI).

It belongs to the UppP family.

It localises to the cell inner membrane. It carries out the reaction di-trans,octa-cis-undecaprenyl diphosphate + H2O = di-trans,octa-cis-undecaprenyl phosphate + phosphate + H(+). Catalyzes the dephosphorylation of undecaprenyl diphosphate (UPP). Confers resistance to bacitracin. The protein is Undecaprenyl-diphosphatase of Colwellia psychrerythraea (strain 34H / ATCC BAA-681) (Vibrio psychroerythus).